Reading from the N-terminus, the 388-residue chain is G2/mitotic-specific cyclin-B2 (388 aa).

Residues 46–67 form a disordered region; that stretch reads ATNGKVGPSKKPSKASCVQKPK.

Belongs to the cyclin family. Cyclin AB subfamily. Interacts with the CDK1 protein kinase to form a serine/threonine kinase holoenzyme complex also known as maturation promoting factor (MPF). The cyclin subunit imparts substrate specificity to the complex.

In terms of biological role, essential for the control of the cell cycle at the G2/M (mitosis) transition. This chain is G2/mitotic-specific cyclin-B2 (ccnb2), found in Oryzias curvinotus (Hynann ricefish).